A 278-amino-acid chain; its full sequence is 4-hydroxy-tetrahydrodipicolinate reductase (278 aa).

NAD(+)-binding positions include 13–18 (GAAGKM) and 111–113 (GTT). Catalysis depends on His-167, which acts as the Proton donor/acceptor. His-168 is a binding site for (S)-2,3,4,5-tetrahydrodipicolinate. Residue Lys-171 is the Proton donor of the active site. 177 to 178 (GT) contacts (S)-2,3,4,5-tetrahydrodipicolinate.

This sequence belongs to the DapB family.

It is found in the cytoplasm. It catalyses the reaction (S)-2,3,4,5-tetrahydrodipicolinate + NAD(+) + H2O = (2S,4S)-4-hydroxy-2,3,4,5-tetrahydrodipicolinate + NADH + H(+). The catalysed reaction is (S)-2,3,4,5-tetrahydrodipicolinate + NADP(+) + H2O = (2S,4S)-4-hydroxy-2,3,4,5-tetrahydrodipicolinate + NADPH + H(+). It functions in the pathway amino-acid biosynthesis; L-lysine biosynthesis via DAP pathway; (S)-tetrahydrodipicolinate from L-aspartate: step 4/4. Its function is as follows. Catalyzes the conversion of 4-hydroxy-tetrahydrodipicolinate (HTPA) to tetrahydrodipicolinate. The protein is 4-hydroxy-tetrahydrodipicolinate reductase of Nostoc sp. (strain PCC 7120 / SAG 25.82 / UTEX 2576).